Reading from the N-terminus, the 507-residue chain is Putative thymidine phosphorylase (507 aa).

Belongs to the thymidine/pyrimidine-nucleoside phosphorylase family. Type 2 subfamily.

It catalyses the reaction thymidine + phosphate = 2-deoxy-alpha-D-ribose 1-phosphate + thymine. The sequence is that of Putative thymidine phosphorylase from Ralstonia nicotianae (strain ATCC BAA-1114 / GMI1000) (Ralstonia solanacearum).